Consider the following 371-residue polypeptide: AA9 family lytic polysaccharide monooxygenase B (371 aa).

The signal sequence occupies residues 1-25 (MSIAKIAGVVLGSAALVAGHGYVSG). 2 residues coordinate Cu(2+): His-20 and His-104. Cystine bridges form between Cys-74–Cys-194 and Cys-115–Cys-119. N-linked (GlcNAc...) asparagine glycosylation occurs at Asn-154. His-180 and Gln-189 together coordinate O2. Residue Tyr-191 participates in Cu(2+) binding. Positions 304 to 332 (HVQATSSSAAASTPTASSGASSGSGSSSS) are disordered. Over residues 307-332 (ATSSSAAASTPTASSGASSGSGSSSS) the composition is skewed to low complexity.

This sequence belongs to the polysaccharide monooxygenase AA9 family. It depends on Cu(2+) as a cofactor.

It localises to the secreted. It catalyses the reaction [(1-&gt;4)-beta-D-glucosyl]n+m + reduced acceptor + O2 = 4-dehydro-beta-D-glucosyl-[(1-&gt;4)-beta-D-glucosyl]n-1 + [(1-&gt;4)-beta-D-glucosyl]m + acceptor + H2O.. Lytic polysaccharide monooxygenase (LPMO) that depolymerizes crystalline and amorphous polysaccharides via the oxidation of scissile alpha- or beta-(1-4)-glycosidic bonds, yielding C1 and C4 oxidation products. Catalysis by LPMOs requires the reduction of the active-site copper from Cu(II) to Cu(I) by a reducing agent and H(2)O(2) or O(2) as a cosubstrate. In addition to cellulose, also cleaves the beta-(1!4)-glucan backbone of tamarind xyloglucan, irrespective of substitutions which contrasts with AA9A xyloglucan cleavage activity. This Aspergillus tamarii protein is AA9 family lytic polysaccharide monooxygenase B.